A 275-amino-acid chain; its full sequence is tRNA pseudouridine synthase A (275 aa).

Residue D55 is the Nucleophile of the active site. Y111 contributes to the substrate binding site.

It belongs to the tRNA pseudouridine synthase TruA family.

It carries out the reaction uridine(38/39/40) in tRNA = pseudouridine(38/39/40) in tRNA. Functionally, formation of pseudouridine at positions 38, 39 and 40 in the anticodon stem and loop of transfer RNAs. The polypeptide is tRNA pseudouridine synthase A (Methanococcoides burtonii (strain DSM 6242 / NBRC 107633 / OCM 468 / ACE-M)).